The sequence spans 499 residues: Cytochrome P450 77A1 (499 aa).

Cys-443 provides a ligand contact to heme.

This sequence belongs to the cytochrome P450 family. The cofactor is heme.

The sequence is that of Cytochrome P450 77A1 (CYP77A1) from Solanum melongena (Eggplant).